Here is a 166-residue protein sequence, read N- to C-terminus: Small ribosomal subunit protein uS5 (166 aa).

One can recognise an S5 DRBM domain in the interval 11 to 74; sequence LQEKLIAVNR…EKARRNMINV (64 aa).

Belongs to the universal ribosomal protein uS5 family. Part of the 30S ribosomal subunit. Contacts proteins S4 and S8.

Functionally, with S4 and S12 plays an important role in translational accuracy. In terms of biological role, located at the back of the 30S subunit body where it stabilizes the conformation of the head with respect to the body. The polypeptide is Small ribosomal subunit protein uS5 (Haemophilus influenzae (strain 86-028NP)).